A 452-amino-acid chain; its full sequence is 23S rRNA (uracil(1939)-C(5))-methyltransferase RlmD (452 aa).

The tract at residues 1–23 is disordered; it reads MSRKKSNGGLRFQPAGGNRATQI. A TRAM domain is found at 22 to 80; it reads QIPVGKKQRLLIERVAGDGRGIAFIEGRTWFVSGALGGEEVEARVLGARGKVVEARLER. 4 residues coordinate [4Fe-4S] cluster: Cys-93, Cys-99, Cys-102, and Cys-181. S-adenosyl-L-methionine contacts are provided by Gln-285, Phe-314, Asn-319, Glu-335, Asp-362, and Asp-383. The active-site Nucleophile is the Cys-409.

This sequence belongs to the class I-like SAM-binding methyltransferase superfamily. RNA M5U methyltransferase family. RlmD subfamily.

It catalyses the reaction uridine(1939) in 23S rRNA + S-adenosyl-L-methionine = 5-methyluridine(1939) in 23S rRNA + S-adenosyl-L-homocysteine + H(+). Its function is as follows. Catalyzes the formation of 5-methyl-uridine at position 1939 (m5U1939) in 23S rRNA. The sequence is that of 23S rRNA (uracil(1939)-C(5))-methyltransferase RlmD from Pseudomonas entomophila (strain L48).